The chain runs to 377 residues: Pulmonary surfactant-associated protein B (377 aa).

The N-terminal stretch at 1–22 (MAKSHLLQWLLLLPTLCCPGAA) is a signal peptide. Positions 23-191 (ITSASSLECA…PHTQDFSEQQ (169 aa)) are excised as a propeptide. Residues 24–64 (TSASSLECAQGPQFWCQSLEHAVQCRALGHCLQEVWGHAGA) enclose the Saposin A-type domain. Saposin B-type domains follow at residues 64-146 (ANDL…PRGQ), 195-272 (PLPF…STED), and 291-366 (QDTE…EAPA). 9 disulfides stabilise this stretch: Cys-68/Cys-142, Cys-71/Cys-136, Cys-99/Cys-111, Cys-199/Cys-268, Cys-202/Cys-262, Cys-226/Cys-237, Cys-295/Cys-362, Cys-298/Cys-356, and Cys-321/Cys-331. Residues 271–377 (EDAMGPALPA…PLQCFQTPHL (107 aa)) constitute a propeptide that is removed on maturation. Residue Asn-307 is glycosylated (N-linked (GlcNAc...) asparagine).

As to quaternary structure, homodimer; disulfide-linked.

It localises to the secreted. It is found in the extracellular space. Its subcellular location is the surface film. In terms of biological role, pulmonary surfactant-associated proteins promote alveolar stability by lowering the surface tension at the air-liquid interface in the peripheral air spaces. SP-B increases the collapse pressure of palmitic acid to nearly 70 millinewtons per meter. This chain is Pulmonary surfactant-associated protein B (Sftpb), found in Mus musculus (Mouse).